The following is a 331-amino-acid chain: Protoheme IX farnesyltransferase (331 aa).

8 helical membrane-spanning segments follow: residues 63–83 (LACTLGGGALAAAAAGALNCL), 109–129 (SVFIGAVACTLVSSALLVSGV), 132–152 (LAAGLTLLGLCSYVLLYTAFL), 160–180 (IVFGGVAGAIPPLVGASAAAG), 188–208 (WLFSLVMVWTPAHFWALAILL), 215–235 (VGIPMLPTVSGPFVTAKAISV), 241–261 (VFLSFLGCFVLPEGGLLYGIL), and 294–314 (ILYMFGVCFLLVISRLQVSIV).

This sequence belongs to the UbiA prenyltransferase family. Protoheme IX farnesyltransferase subfamily.

The protein localises to the cell inner membrane. It carries out the reaction heme b + (2E,6E)-farnesyl diphosphate + H2O = Fe(II)-heme o + diphosphate. Its pathway is porphyrin-containing compound metabolism; heme O biosynthesis; heme O from protoheme: step 1/1. In terms of biological role, converts heme B (protoheme IX) to heme O by substitution of the vinyl group on carbon 2 of heme B porphyrin ring with a hydroxyethyl farnesyl side group. The chain is Protoheme IX farnesyltransferase from Prochlorococcus marinus (strain NATL2A).